The primary structure comprises 177 residues: Large ribosomal subunit protein uL6 (177 aa).

The protein belongs to the universal ribosomal protein uL6 family. As to quaternary structure, part of the 50S ribosomal subunit.

Its function is as follows. This protein binds to the 23S rRNA, and is important in its secondary structure. It is located near the subunit interface in the base of the L7/L12 stalk, and near the tRNA binding site of the peptidyltransferase center. The chain is Large ribosomal subunit protein uL6 from Azoarcus sp. (strain BH72).